Reading from the N-terminus, the 171-residue chain is Ribosome maturation factor RimM (171 aa).

The PRC barrel domain maps to 97–169 (DGEFYYHEII…RVDVSIMEGL (73 aa)).

It belongs to the RimM family. In terms of assembly, binds ribosomal protein uS19.

It is found in the cytoplasm. In terms of biological role, an accessory protein needed during the final step in the assembly of 30S ribosomal subunit, possibly for assembly of the head region. Essential for efficient processing of 16S rRNA. May be needed both before and after RbfA during the maturation of 16S rRNA. It has affinity for free ribosomal 30S subunits but not for 70S ribosomes. The sequence is that of Ribosome maturation factor RimM from Lactococcus lactis subsp. lactis (strain IL1403) (Streptococcus lactis).